We begin with the raw amino-acid sequence, 310 residues long: Protein A56 (310 aa).

The signal sequence occupies residues 1–16; sequence MKQLSIVILLLSIVYT. Over 17–275 the chain is Virion surface; that stretch reads TKPHPTQISK…TKYTTSDFIE (259 aa). Residues 19–121 enclose the Ig-like V-type domain; that stretch reads PHPTQISKKL…TNDTDKIDYE (103 aa). A disulfide bridge connects residues Cys-36 and Cys-105. Asn-39, Asn-113, and Asn-133 each carry an N-linked (GlcNAc...) asparagine; by host glycan. The tract at residues 153 to 195 is disordered; it reads HTEEQHDSDTTICTSESTTQISETSESTTSSQISETSESTSYG. Residues 162-193 show a composition bias toward low complexity; the sequence is TTICTSESTTQISETSESTTSSQISETSESTS. The N-linked (GlcNAc...) asparagine; by host glycan is linked to Asn-203. The chain crosses the membrane as a helical span at residues 276 to 300; the sequence is IFGIVSLILLLAVAIFCIIYYFCSG. The Intravirion portion of the chain corresponds to 301 to 310; sequence RSRKQETNIL.

As to quaternary structure, heterodimerizes with K2. The heterodimer A56/K2 interacts with components of the entry fusion complex A16 and G9. Interacts with K2 protein. Heterodimer with C3/VPC protein; disulfide-linked. Glycosylated; contains phosphate and sulfate-substituted glycans. O-glycosylation is required for hemagglutination and hemadsorption activities of infected cell membranes.

The protein localises to the virion membrane. It localises to the host membrane. Functionally, prevents cell to cell fusion by interacting with and directing the viral K2 protein on the host plasma membrane. The A56-K2 complex associates with components of the entry fusion complex (EFC) presumably to avoid superinfection and syncytium formation. Via its interaction with C3/VCP protein, protects the infected cell and probably also the extracellular enveloped virus from complement attack. In Raccoon poxvirus (RCN), this protein is Protein A56 (HA).